The primary structure comprises 363 residues: Protein-arginine kinase (363 aa).

In terms of domain architecture, Phosphagen kinase C-terminal spans 24–255 (IVLSSRIRLA…QQLIAQERAA (232 aa)). ATP-binding positions include 27-31 (SSRIR), histidine 92, arginine 126, 177-181 (RASVM), and 208-213 (RGTYGE). An RDXXRA motif of the pArg binding pocket involved in allosteric regulation motif is present at residues 338–343 (RDVRRA).

The protein belongs to the ATP:guanido phosphotransferase family.

It carries out the reaction L-arginyl-[protein] + ATP = N(omega)-phospho-L-arginyl-[protein] + ADP + H(+). Appears to be allosterically activated by the binding of pArg-containing polypeptides to the pArg-binding pocket localized in the C-terminal domain of McsB. Catalyzes the specific phosphorylation of arginine residues in a large number of proteins. Is part of the bacterial stress response system. Protein arginine phosphorylation has a physiologically important role and is involved in the regulation of many critical cellular processes, such as protein homeostasis, motility, competence, and stringent and stress responses, by regulating gene expression and protein activity. This chain is Protein-arginine kinase, found in Geobacillus kaustophilus (strain HTA426).